Here is a 760-residue protein sequence, read N- to C-terminus: Xaa-Pro dipeptidyl-peptidase (760 aa).

Residues Ser-349, Asp-469, and His-499 each act as charge relay system in the active site.

Belongs to the peptidase S15 family. In terms of assembly, homodimer.

It localises to the cytoplasm. It carries out the reaction Hydrolyzes Xaa-Pro-|- bonds to release unblocked, N-terminal dipeptides from substrates including Ala-Pro-|-p-nitroanilide and (sequentially) Tyr-Pro-|-Phe-Pro-|-Gly-Pro-|-Ile.. Removes N-terminal dipeptides sequentially from polypeptides having unsubstituted N-termini provided that the penultimate residue is proline. The protein is Xaa-Pro dipeptidyl-peptidase of Streptococcus pyogenes serotype M1.